Consider the following 1367-residue polypeptide: DNA polymerase III PolC-type (1367 aa).

The Exonuclease domain occupies 358 to 513 (FVVLDFETTG…DDARVTAQVF (156 aa)).

This sequence belongs to the DNA polymerase type-C family. PolC subfamily.

It localises to the cytoplasm. It catalyses the reaction DNA(n) + a 2'-deoxyribonucleoside 5'-triphosphate = DNA(n+1) + diphosphate. In terms of biological role, required for replicative DNA synthesis. This DNA polymerase also exhibits 3' to 5' exonuclease activity. The polypeptide is DNA polymerase III PolC-type (Thermotoga maritima (strain ATCC 43589 / DSM 3109 / JCM 10099 / NBRC 100826 / MSB8)).